The sequence spans 185 residues: Thymidine kinase (185 aa).

ATP is bound by residues 10–17 (GPMYSGKT) and 83–86 (DEVQ). Glu-84 (proton acceptor) is an active-site residue. Zn(2+) is bound by residues Cys-140, Cys-143, Cys-173, and Cys-176.

Belongs to the thymidine kinase family. Homotetramer.

It localises to the cytoplasm. The enzyme catalyses thymidine + ATP = dTMP + ADP + H(+). This chain is Thymidine kinase, found in Pseudothermotoga lettingae (strain ATCC BAA-301 / DSM 14385 / NBRC 107922 / TMO) (Thermotoga lettingae).